A 93-amino-acid chain; its full sequence is Cobalt transport protein CbiN (93 aa).

The next 2 membrane-spanning stretches (helical) occupy residues 5–25 (LMLLAMVVALVILPFFINHGG) and 63–83 (LLFTLQGSLGAAVIFYILGYC).

It belongs to the CbiN family. In terms of assembly, forms an energy-coupling factor (ECF) transporter complex composed of an ATP-binding protein (A component, CbiO), a transmembrane protein (T component, CbiQ) and 2 possible substrate-capture proteins (S components, CbiM and CbiN) of unknown stoichimetry.

It localises to the cell inner membrane. It participates in cofactor biosynthesis; adenosylcobalamin biosynthesis. Part of the energy-coupling factor (ECF) transporter complex CbiMNOQ involved in cobalt import. The polypeptide is Cobalt transport protein CbiN (Salmonella newport (strain SL254)).